The chain runs to 437 residues: Histidine--tRNA ligase (437 aa).

It belongs to the class-II aminoacyl-tRNA synthetase family. Homodimer.

Its subcellular location is the cytoplasm. The catalysed reaction is tRNA(His) + L-histidine + ATP = L-histidyl-tRNA(His) + AMP + diphosphate + H(+). In Opitutus terrae (strain DSM 11246 / JCM 15787 / PB90-1), this protein is Histidine--tRNA ligase.